The sequence spans 363 residues: Adenosine deaminase (363 aa).

Residues histidine 42 and histidine 44 each contribute to the Zn(2+) site. Residues 44–46, aspartate 172, and glycine 201 each bind a purine D-ribonucleoside; that span reads HLD. A gating helix loop; regulates binding affinity for substrates and thus substrate selectivity region spans residues 170-184; the sequence is IGDTGHEAANIKASA. Histidine 226 serves as a coordination point for Zn(2+). Glutamate 229, histidine 253, and aspartate 310 together coordinate a purine D-ribonucleoside. Aspartate 310 contributes to the Zn(2+) binding site.

It belongs to the metallo-dependent hydrolases superfamily. Adenosine and AMP deaminases family. Zn(2+) serves as cofactor.

The catalysed reaction is adenosine + H2O + H(+) = inosine + NH4(+). The enzyme catalyses S-methyl-5'-thioadenosine + H2O + H(+) = S-methyl-5'-thioinosine + NH4(+). It functions in the pathway purine metabolism; purine nucleoside salvage. Inhibited by coformycin and methylthiocoformycin (MT-coformycin). Its function is as follows. Catalyzes the hydrolytic deamination of adenosine to produce inosine. Unlike mammalian adenosine deaminases, also catalyzes the deamination of 5'-methylthioadenosine (MTA), a by-product of polyamine biosynthesis, to produce 5'-methylthioinosine (MTI). Plays an essential role in the purine salvage pathway which allows the parasite to use host cell purines for the synthesis of nucleic acids. The protein is Adenosine deaminase of Plasmodium cynomolgi (strain B).